Here is a 115-residue protein sequence, read N- to C-terminus: Iron-sulfur cluster insertion protein ErpA (115 aa).

Iron-sulfur cluster contacts are provided by C43, C107, and C109.

Belongs to the HesB/IscA family. Homodimer. Requires iron-sulfur cluster as cofactor.

Its function is as follows. Required for insertion of 4Fe-4S clusters for at least IspG. The sequence is that of Iron-sulfur cluster insertion protein ErpA from Buchnera aphidicola subsp. Baizongia pistaciae (strain Bp).